The chain runs to 369 residues: Arsenite methyltransferase (369 aa).

Ser46 carries the phosphoserine modification.

This sequence belongs to the methyltransferase superfamily. Arsenite methyltransferase family.

The protein resides in the cytoplasm. Its subcellular location is the cytosol. It catalyses the reaction arsenic triglutathione + [thioredoxin]-dithiol + S-adenosyl-L-methionine + 2 H2O = methylarsonous acid + [thioredoxin]-disulfide + 3 glutathione + S-adenosyl-L-homocysteine + H(+). The catalysed reaction is arsenic triglutathione + 2 [thioredoxin]-dithiol + 2 S-adenosyl-L-methionine + H2O = dimethylarsinous acid + 2 [thioredoxin]-disulfide + 3 glutathione + 2 S-adenosyl-L-homocysteine + 2 H(+). It carries out the reaction arsenic triglutathione + 3 [thioredoxin]-dithiol + 3 S-adenosyl-L-methionine = trimethylarsine + 3 [thioredoxin]-disulfide + 3 glutathione + 3 S-adenosyl-L-homocysteine + 3 H(+). Catalyzes the transfer of a methyl group from AdoMet to trivalent arsenicals producing methylated and dimethylated arsenicals. It methylates arsenite to form methylarsonate, Me-AsO(3)H(2), which is reduced by methylarsonate reductase to methylarsonite, Me-As(OH)2. Methylarsonite is also a substrate and it is converted into the much less toxic compound dimethylarsinate (cacodylate), Me(2)As(O)-OH. The polypeptide is Arsenite methyltransferase (As3mt) (Rattus norvegicus (Rat)).